Consider the following 311-residue polypeptide: Glutaminase (311 aa).

Positions 69, 120, 164, 171, 195, 247, and 265 each coordinate substrate.

It belongs to the glutaminase family. Homotetramer.

The catalysed reaction is L-glutamine + H2O = L-glutamate + NH4(+). This is Glutaminase from Colwellia psychrerythraea (strain 34H / ATCC BAA-681) (Vibrio psychroerythus).